The following is a 101-amino-acid chain: NAD(P)H-quinone oxidoreductase subunit 4L, chloroplastic (101 aa).

The next 3 helical transmembrane spans lie at 2-22 (ILEH…YGLI), 32-52 (MCLE…SDFF), and 61-81 (IFCI…LAIV).

It belongs to the complex I subunit 4L family. As to quaternary structure, NDH is composed of at least 16 different subunits, 5 of which are encoded in the nucleus.

It localises to the plastid. It is found in the chloroplast thylakoid membrane. It catalyses the reaction a plastoquinone + NADH + (n+1) H(+)(in) = a plastoquinol + NAD(+) + n H(+)(out). It carries out the reaction a plastoquinone + NADPH + (n+1) H(+)(in) = a plastoquinol + NADP(+) + n H(+)(out). Its function is as follows. NDH shuttles electrons from NAD(P)H:plastoquinone, via FMN and iron-sulfur (Fe-S) centers, to quinones in the photosynthetic chain and possibly in a chloroplast respiratory chain. The immediate electron acceptor for the enzyme in this species is believed to be plastoquinone. Couples the redox reaction to proton translocation, and thus conserves the redox energy in a proton gradient. This Draba nemorosa (Woodland whitlowgrass) protein is NAD(P)H-quinone oxidoreductase subunit 4L, chloroplastic.